The following is a 521-amino-acid chain: Cytochrome P450 monooxygenase astF (521 aa).

A helical membrane pass occupies residues 14–34; it reads TMATFLLPVAIGTIILLFLYG. Residues N198, N218, N268, and N281 are each glycosylated (N-linked (GlcNAc...) asparagine). A heme-binding site is contributed by C430.

The protein belongs to the cytochrome P450 family. Heme is required as a cofactor.

It localises to the membrane. It functions in the pathway secondary metabolite biosynthesis; terpenoid biosynthesis. Its function is as follows. Cytochrome P450 monooxygenase; part of the gene cluster that mediates the biosynthesis of astellolides, drimane-type sesquiterpene esters that show antimicrobial, anti-inflammatory, and anti-tumor activities. The first step in astellolide biosynthesis is performed by the sesquiterpene cyclase astC that catalyzes the formation of drimanyl pyrophosphate from farnesyl pyrophosphate. Drimanyl pyrophosphate is then dephosphorylated by the sesquiterpene phosphatase astI to produce drimanyl monophosphate which is further dephosphorylated to drim-8-ene-11-ol by atsK. Drim-8-ene-11-ol is converted to confertifolin, probably by the cytochrome P450 monooxygenase astD and/or the dehydrogenase astE. The cytochrome P450 monooxygenases astB, astF and astJ then hydroxylate confertifolin at C6, C14, or C15 to form trihydroxy confertifolin. The nonribosomal peptide synthetase astA catalyzes ester bond formation between trihydroxy contifolin and benzoic acid (BA) or 4-hydroxy benzoic acid (4HBA), leading to the formation of dideacetyl astellolides A and B, respectively. Finally, the O-acetyltransferase astG converts dideacetyl astellolides A and B into deacetyl astellolides A and B. This Aspergillus oryzae (strain ATCC 42149 / RIB 40) (Yellow koji mold) protein is Cytochrome P450 monooxygenase astF.